The primary structure comprises 475 residues: Ribosomal RNA small subunit methyltransferase F (475 aa).

S-adenosyl-L-methionine-binding positions include 125 to 131 (AAAPGSK), E149, D176, and D194. The active-site Nucleophile is the C247.

The protein belongs to the class I-like SAM-binding methyltransferase superfamily. RsmB/NOP family.

It localises to the cytoplasm. It carries out the reaction cytidine(1407) in 16S rRNA + S-adenosyl-L-methionine = 5-methylcytidine(1407) in 16S rRNA + S-adenosyl-L-homocysteine + H(+). Specifically methylates the cytosine at position 1407 (m5C1407) of 16S rRNA. The protein is Ribosomal RNA small subunit methyltransferase F of Aeromonas hydrophila subsp. hydrophila (strain ATCC 7966 / DSM 30187 / BCRC 13018 / CCUG 14551 / JCM 1027 / KCTC 2358 / NCIMB 9240 / NCTC 8049).